We begin with the raw amino-acid sequence, 424 residues long: Multifunctional CCA protein (424 aa).

Positions 8 and 11 each coordinate ATP. G8 and R11 together coordinate CTP. Residues D21 and D23 each coordinate Mg(2+). Residues R91, R149, and R152 each contribute to the ATP site. CTP is bound by residues R91, R149, and R152. The region spanning 238–339 is the HD domain; the sequence is TGIHLMMVLD…VRLLERCDAF (102 aa).

The protein belongs to the tRNA nucleotidyltransferase/poly(A) polymerase family. Bacterial CCA-adding enzyme type 1 subfamily. In terms of assembly, monomer. Can also form homodimers and oligomers. Mg(2+) serves as cofactor. It depends on Ni(2+) as a cofactor.

It carries out the reaction a tRNA precursor + 2 CTP + ATP = a tRNA with a 3' CCA end + 3 diphosphate. It catalyses the reaction a tRNA with a 3' CCA end + 2 CTP + ATP = a tRNA with a 3' CCACCA end + 3 diphosphate. Its function is as follows. Catalyzes the addition and repair of the essential 3'-terminal CCA sequence in tRNAs without using a nucleic acid template. Adds these three nucleotides in the order of C, C, and A to the tRNA nucleotide-73, using CTP and ATP as substrates and producing inorganic pyrophosphate. tRNA 3'-terminal CCA addition is required both for tRNA processing and repair. Also involved in tRNA surveillance by mediating tandem CCA addition to generate a CCACCA at the 3' terminus of unstable tRNAs. While stable tRNAs receive only 3'-terminal CCA, unstable tRNAs are marked with CCACCA and rapidly degraded. This chain is Multifunctional CCA protein, found in Polaromonas naphthalenivorans (strain CJ2).